The sequence spans 318 residues: Phosphatidylglycerol--prolipoprotein diacylglyceryl transferase (318 aa).

Helical transmembrane passes span 24–44, 60–80, and 115–135; these read GPST…YLLP, LLLL…VFEI, and LFSG…LFIT. Arginine 164 lines the a 1,2-diacyl-sn-glycero-3-phospho-(1'-sn-glycerol) pocket. 2 consecutive transmembrane segments (helical) span residues 198 to 218 and 285 to 305; these read VPVW…FFYF and GFSQ…FFIL.

This sequence belongs to the Lgt family.

It localises to the cell inner membrane. It carries out the reaction L-cysteinyl-[prolipoprotein] + a 1,2-diacyl-sn-glycero-3-phospho-(1'-sn-glycerol) = an S-1,2-diacyl-sn-glyceryl-L-cysteinyl-[prolipoprotein] + sn-glycerol 1-phosphate + H(+). The protein operates within protein modification; lipoprotein biosynthesis (diacylglyceryl transfer). In terms of biological role, catalyzes the transfer of the diacylglyceryl group from phosphatidylglycerol to the sulfhydryl group of the N-terminal cysteine of a prolipoprotein, the first step in the formation of mature lipoproteins. This chain is Phosphatidylglycerol--prolipoprotein diacylglyceryl transferase, found in Leptospira interrogans serogroup Icterohaemorrhagiae serovar copenhageni (strain Fiocruz L1-130).